Reading from the N-terminus, the 137-residue chain is Cofilin-1A (137 aa).

In terms of domain architecture, ADF-H spans serine 2–threonine 135.

Belongs to the actin-binding proteins ADF family.

It localises to the nucleus matrix. Its subcellular location is the cytoplasm. The protein localises to the cytoskeleton. In terms of biological role, controls reversibly actin polymerization and depolymerization in a pH-sensitive manner. It has the ability to bind G- and F-actin in a 1:1 ratio of cofilin to actin. It is the major component of intranuclear and cytoplasmic actin rods. The polypeptide is Cofilin-1A (cofA) (Dictyostelium discoideum (Social amoeba)).